A 517-amino-acid chain; its full sequence is Protein BTN1 (517 aa).

8 helical membrane passes run 24 to 44, 57 to 77, 88 to 108, 112 to 132, 146 to 166, 169 to 189, 371 to 391, and 409 to 429; these read LFAA…IILS, GVVA…WPLL, VGFC…SSSL, LLGI…FLQL, LGAW…IWWL, GLGV…FPIT, PAII…TFFF, and SITI…SGYV.

It belongs to the battenin family.

It localises to the vacuole membrane. Functionally, involved in vacuolar transport and vacuole pH homeostasis. Also required for cytokinesis. This is Protein BTN1 (BTN1) from Cryptococcus neoformans var. neoformans serotype D (strain B-3501A) (Filobasidiella neoformans).